The following is a 304-amino-acid chain: Splicing factor U2af small subunit B (304 aa).

The C3H1-type 1 zinc-finger motif lies at 12-40 (EKDRVNCPFYFKIGACRHGDRCSRLHNRP). Residues 44–146 (PTIVLANMYQ…RPIIVEYSPV (103 aa)) enclose the RRM domain. The C3H1-type 2 zinc-finger motif lies at 148-175 (DFREATCRQFEENSCNRGGYCNFMHVKQ). Residues 184-207 (LYGGRSRRSHGRSRSPSPRHRRGN) are compositionally biased toward basic residues. The disordered stretch occupies residues 184–304 (LYGGRSRRSH…QWNREREEKP (121 aa)). Over residues 208–220 (RDRDDFRRERDGY) the composition is skewed to basic and acidic residues. Residues 221–258 (RGGGDGYRGGGGGGGGDGYRGGDSYRGGGGGGRRGGGS) show a composition bias toward gly residues. The span at 268-280 (RRRHGSPPRRARS) shows a compositional bias: basic residues. Positions 281-304 (PVRESSEERRAKIEQWNREREEKP) are enriched in basic and acidic residues.

Belongs to the splicing factor SR family.

The protein localises to the nucleus. Functionally, necessary for the splicing of pre-mRNA. The sequence is that of Splicing factor U2af small subunit B (U2AF35B) from Oryza sativa subsp. japonica (Rice).